A 349-amino-acid polypeptide reads, in one-letter code: UDP-N-acetylenolpyruvoylglucosamine reductase (349 aa).

The FAD-binding PCMH-type domain maps to 26–197 (FDARARVAAR…VAVTFRLPKA (172 aa)). The active site involves Arg-173. Residue Ser-249 is the Proton donor of the active site. The active site involves Glu-345.

This sequence belongs to the MurB family. FAD is required as a cofactor.

It is found in the cytoplasm. It catalyses the reaction UDP-N-acetyl-alpha-D-muramate + NADP(+) = UDP-N-acetyl-3-O-(1-carboxyvinyl)-alpha-D-glucosamine + NADPH + H(+). The protein operates within cell wall biogenesis; peptidoglycan biosynthesis. Its function is as follows. Cell wall formation. This is UDP-N-acetylenolpyruvoylglucosamine reductase from Burkholderia pseudomallei (strain K96243).